Reading from the N-terminus, the 191-residue chain is Shikimate kinase (191 aa).

ATP is bound at residue Gly-14 to Thr-19. Ser-18 provides a ligand contact to Mg(2+). Substrate-binding residues include Asp-36, Arg-60, and Gly-82. Arg-120 contributes to the ATP binding site. Arg-147 contacts substrate.

Belongs to the shikimate kinase family. As to quaternary structure, monomer. It depends on Mg(2+) as a cofactor.

The protein resides in the cytoplasm. The catalysed reaction is shikimate + ATP = 3-phosphoshikimate + ADP + H(+). It functions in the pathway metabolic intermediate biosynthesis; chorismate biosynthesis; chorismate from D-erythrose 4-phosphate and phosphoenolpyruvate: step 5/7. Functionally, catalyzes the specific phosphorylation of the 3-hydroxyl group of shikimic acid using ATP as a cosubstrate. This Chlorobaculum tepidum (strain ATCC 49652 / DSM 12025 / NBRC 103806 / TLS) (Chlorobium tepidum) protein is Shikimate kinase.